Here is a 227-residue protein sequence, read N- to C-terminus: UPF0758 protein Dred_2549 (227 aa).

The region spanning 105 to 227 (IIRCPEDVCG…FTSLKSKGLI (123 aa)) is the MPN domain. Residues His-176, His-178, and Asp-189 each contribute to the Zn(2+) site. The JAMM motif signature appears at 176 to 189 (HNHPSGDPTPSRED).

It belongs to the UPF0758 family.

This Desulforamulus reducens (strain ATCC BAA-1160 / DSM 100696 / MI-1) (Desulfotomaculum reducens) protein is UPF0758 protein Dred_2549.